The chain runs to 400 residues: Egl nine homolog 1 (400 aa).

At alanine 2 the chain carries N-acetylalanine. Residues 6 to 20 are required for nuclear export; the sequence is GGPGVLSASERDRQY. The residue at position 12 (serine 12) is a Phosphoserine. Positions 21, 24, 33, 36, 42, 46, 54, and 58 each coordinate Zn(2+). The segment at 21-58 adopts an MYND-type; atypical zinc-finger fold; it reads CELCGKMENLLRCGRCRSSFYCCKEHQRQDWKKHKLVC. The span at 62 to 74 shows a compositional bias: low complexity; sequence EAPRAQPAPAQPR. The interval 62-161 is disordered; it reads EAPRAQPAPA…PGGGLRPNGQ (100 aa). Serine 114 carries the post-translational modification Phosphoserine. The segment covering 142 to 157 has biased composition (gly residues); that stretch reads AGGGPGEALSPGGGLR. S-nitrosocysteine occurs at positions 178 and 185. The interval 218–228 is beta(2)beta(3) 'finger-like' loop; that stretch reads VSQKSDSSKDI. Positions 271–369 constitute a Fe2OG dioxygenase domain; sequence GRTKAMVACY…RYAITVWYFD (99 aa). S-nitrosocysteine is present on cysteine 279. Fe cation-binding residues include histidine 290 and aspartate 292. S-nitrosocysteine is present on residues cysteine 300 and cysteine 303. Histidine 351 contributes to the Fe cation binding site. Arginine 360 is a 2-oxoglutarate binding site.

As to quaternary structure, monomer. Interacts with ING4; the interaction inhibits the hydroxylation of HIF alpha proteins. Interacts with PTGES3 (via PXLE motif); thereby recruiting EGLN1 to the HSP90 pathway to facilitate HIF alpha proteins hydroxylation. Interacts with LIMD1. Found in a complex composed of LIMD1, VHL, EGLN1/PHD2, ELOB and CUL2. Interacts with EPAS1. Interacts with CBFA2T3 and HIF1A. It depends on Fe(2+) as a cofactor. The cofactor is L-ascorbate. Post-translationally, S-nitrosylation inhibits the enzyme activity up to 60% under aerobic conditions. Chelation of Fe(2+) has no effect on the S-nitrosylation. It is uncertain whether nitrosylation occurs on Cys-300 or Cys-303. Expressed in heart, brain liver, skeletal muscle and kidney. Low levels were detected in the lung. Constitutively expressed during differentiation of C2C12 skeletal myocytes.

The protein resides in the cytoplasm. It is found in the nucleus. The catalysed reaction is L-prolyl-[hypoxia-inducible factor alpha subunit] + 2-oxoglutarate + O2 = trans-4-hydroxy-L-prolyl-[hypoxia-inducible factor alpha subunit] + succinate + CO2. Its function is as follows. Cellular oxygen sensor that catalyzes, under normoxic conditions, the post-translational formation of 4-hydroxyproline in hypoxia-inducible factor (HIF) alpha proteins. Hydroxylates a specific proline found in each of the oxygen-dependent degradation (ODD) domains (N-terminal, NODD, and C-terminal, CODD) of HIF1A. Also hydroxylates HIF2A. Has a preference for the CODD site for both HIF1A and HIF1B. Hydroxylated HIFs are then targeted for proteasomal degradation via the von Hippel-Lindau ubiquitination complex. Under hypoxic conditions, the hydroxylation reaction is attenuated allowing HIFs to escape degradation resulting in their translocation to the nucleus, heterodimerization with HIF1B, and increased expression of hypoxy-inducible genes. EGLN1 is the most important isozyme under normoxia and, through regulating the stability of HIF1, involved in various hypoxia-influenced processes such as angiogenesis in retinal and cardiac functionality. Target proteins are preferentially recognized via a LXXLAP motif. In Mus musculus (Mouse), this protein is Egl nine homolog 1 (Egln1).